A 93-amino-acid chain; its full sequence is Phosphoribosyl-ATP pyrophosphatase (93 aa).

This sequence belongs to the PRA-PH family.

It localises to the cytoplasm. It catalyses the reaction 1-(5-phospho-beta-D-ribosyl)-ATP + H2O = 1-(5-phospho-beta-D-ribosyl)-5'-AMP + diphosphate + H(+). It participates in amino-acid biosynthesis; L-histidine biosynthesis; L-histidine from 5-phospho-alpha-D-ribose 1-diphosphate: step 2/9. This Mycobacterium bovis (strain ATCC BAA-935 / AF2122/97) protein is Phosphoribosyl-ATP pyrophosphatase (hisE).